Consider the following 29-residue polypeptide: Cytochrome b6-f complex subunit 8 (29 aa).

Residues 3–23 (IVSFAWAALMVVFTFSLSLVV) form a helical membrane-spanning segment.

This sequence belongs to the PetN family. The 4 large subunits of the cytochrome b6-f complex are cytochrome b6, subunit IV (17 kDa polypeptide, PetD), cytochrome f and the Rieske protein, while the 4 small subunits are PetG, PetL, PetM and PetN. The complex functions as a dimer.

It localises to the plastid. It is found in the chloroplast thylakoid membrane. Functionally, component of the cytochrome b6-f complex, which mediates electron transfer between photosystem II (PSII) and photosystem I (PSI), cyclic electron flow around PSI, and state transitions. The sequence is that of Cytochrome b6-f complex subunit 8 from Phalaenopsis aphrodite subsp. formosana (Moth orchid).